Here is a 1087-residue protein sequence, read N- to C-terminus: Platelet-derived growth factor receptor alpha (1087 aa).

The N-terminal stretch at Met1–Cys23 is a signal peptide. Topologically, residues Gln24 to Ala528 are extracellular. 5 consecutive Ig-like C2-type domains span residues Pro26–Thr104, Ile116–Leu208, Gln213–Lys312, Phe314–Ile411, and Pro414–Val517. N-linked (GlcNAc...) asparagine glycans are attached at residues Asn44, Asn75, Asn88, and Asn102. Cysteines 49 and 99 form a disulfide. 2 disulfide bridges follow: Cys149–Cys189 and Cys235–Cys290. Asn353, Asn359, Asn458, and Asn468 each carry an N-linked (GlcNAc...) asparagine glycan. A disulfide bridge links Cys435 with Cys501. Residues Ala529 to Trp549 traverse the membrane as a helical segment. Residues Lys550 to Leu1087 lie on the Cytoplasmic side of the membrane. Residues Tyr572 and Tyr574 each carry the phosphotyrosine; by autocatalysis modification. Positions Leu593–Leu954 constitute a Protein kinase domain. ATP contacts are provided by residues Leu599–Val607 and Lys627. Residues Tyr720, Tyr731, Tyr742, Tyr754, Tyr762, and Tyr768 each carry the phosphotyrosine; by autocatalysis modification. Catalysis depends on Asp818, which acts as the Proton acceptor. Phosphotyrosine; by autocatalysis is present on residues Tyr849 and Tyr988. Positions Lys1000–Leu1011 are enriched in basic and acidic residues. The interval Lys1000–Lys1059 is disordered. Phosphotyrosine; by autocatalysis is present on Tyr1017. Polar residues predominate over residues Ser1039–Phe1057.

Belongs to the protein kinase superfamily. Tyr protein kinase family. CSF-1/PDGF receptor subfamily. Interacts with homodimeric PDGFA, PDGFB and PDGFC, and with heterodimers formed by PDGFA and PDGFB. Monomer in the absence of bound ligand. Interaction with dimeric PDGFA, PDGFB and/or PDGFC leads to receptor dimerization, where both PDGFRA homodimers and heterodimers with PDGFRB are observed. In terms of processing, ubiquitinated, leading to its internalization and degradation. Autophosphorylated on tyrosine residues upon ligand binding. Autophosphorylation occurs in trans, i.e. one subunit of the dimeric receptor phosphorylates tyrosine residues on the other subunit.

The protein localises to the cell membrane. It localises to the cell projection. The protein resides in the cilium. It is found in the golgi apparatus. It catalyses the reaction L-tyrosyl-[protein] + ATP = O-phospho-L-tyrosyl-[protein] + ADP + H(+). With respect to regulation, present in an inactive conformation in the absence of bound ligand. Binding of PDGFA and/or PDGFB leads to dimerization and activation by autophosphorylation on tyrosine residues. Tyrosine-protein kinase that acts as a cell-surface receptor for PDGFA, PDGFB and PDGFC and plays an essential role in the regulation of embryonic development, cell proliferation, survival and chemotaxis. Depending on the context, promotes or inhibits cell proliferation and cell migration. Plays an important role in the differentiation of bone marrow-derived mesenchymal stem cells. Required for normal skeleton development. Required for normal development of the gastrointestinal tract. Plays a role in cell migration and chemotaxis in wound healing. Plays a role in platelet activation, secretion of agonists from platelet granules, and in thrombin-induced platelet aggregation. Binding of its cognate ligands - homodimeric PDGFA, homodimeric PDGFB, heterodimers formed by PDGFA and PDGFB or homodimeric PDGFC -leads to the activation of several signaling cascades; the response depends on the nature of the bound ligand and is modulated by the formation of heterodimers between PDGFRA and PDGFRB. Phosphorylates PIK3R1, PLCG1, and PTPN11. Activation of PLCG1 leads to the production of the cellular signaling molecules diacylglycerol and inositol 1,4,5-trisphosphate, mobilization of cytosolic Ca(2+) and the activation of protein kinase C. Phosphorylates PIK3R1, the regulatory subunit of phosphatidylinositol 3-kinase, and thereby mediates activation of the AKT1 signaling pathway. Mediates activation of HRAS and of the MAP kinases MAPK1/ERK2 and/or MAPK3/ERK1. Promotes activation of STAT family members STAT1, STAT3 and STAT5A and/or STAT5B. Receptor signaling is down-regulated by protein phosphatases that dephosphorylate the receptor and its down-stream effectors, and by rapid internalization of the activated receptor. The chain is Platelet-derived growth factor receptor alpha (PDGFRA) from Gallus gallus (Chicken).